A 183-amino-acid polypeptide reads, in one-letter code: Cell division protein ZapC (183 aa).

This sequence belongs to the ZapC family. As to quaternary structure, interacts directly with FtsZ.

The protein localises to the cytoplasm. Its function is as follows. Contributes to the efficiency of the cell division process by stabilizing the polymeric form of the cell division protein FtsZ. Acts by promoting interactions between FtsZ protofilaments and suppressing the GTPase activity of FtsZ. The chain is Cell division protein ZapC from Xenorhabdus bovienii (strain SS-2004) (Xenorhabdus nematophila subsp. bovienii).